Here is a 492-residue protein sequence, read N- to C-terminus: Protein KOKOPELLI (492 aa).

2 disordered regions span residues 218–354 and 394–426; these read VTSP…RNVM and SKFH…QHQG. Over residues 256-270 the composition is skewed to acidic residues; that stretch reads QETETFDDDSSETEA. Low complexity predominate over residues 287 to 305; that stretch reads STSQEYSGETGSSSGSEWE. Residues 317–336 are compositionally biased toward polar residues; that stretch reads ESSYPPQNDDSVSEVSTSPP. Basic and acidic residues-rich tracts occupy residues 337-348 and 403-412; these read HTDRDTSREPGK and KSKERKRPMS.

In terms of tissue distribution, mostly expressed in pollen and open flowers and, to a lower extent, in closed flowers.

In terms of biological role, positively regulates reproductive function by facilitating male gametophyte formation and double fertilization. This is Protein KOKOPELLI from Arabidopsis thaliana (Mouse-ear cress).